Here is a 436-residue protein sequence, read N- to C-terminus: Envelope glycoprotein (436 aa).

Met-1 is a signal peptide. Topologically, residues 2–436 (ANPSPHQIYN…GGLTVGGIAA (435 aa)) are extracellular. N-linked (GlcNAc...) asparagine; by host glycosylation is found at Asn-11 and Asn-26. 2 disulfides stabilise this stretch: Cys-95–Cys-117 and Cys-109–Cys-122. The interval 203-255 (PPQAMGPNLVLPDQKPPSRQSQTGSKVATQRPQTNESAPRSVGPTTMGPKRIG) is disordered. The segment covering 219 to 240 (PSRQSQTGSKVATQRPQTNESA) has biased composition (polar residues). N-linked (GlcNAc...) asparagine; by host glycans are attached at residues Asn-237, Asn-272, and Asn-277. Residues 282–285 (CWLC) carry the CXXC motif. Asn-304, Asn-344, Asn-360, and Asn-380 each carry an N-linked (GlcNAc...) asparagine; by host glycan.

As to quaternary structure, the mature envelope protein (Env) consists of a trimer of SU-TM heterodimers attached by a labile interchain disulfide bond. Post-translationally, specific enzymatic cleavages in vivo yield mature proteins. Envelope glycoproteins are synthesized as an inactive precursor that is N-glycosylated and processed likely by host cell furin or by a furin-like protease in the Golgi to yield the mature SU and TM proteins. The cleavage site between SU and TM requires the minimal sequence [KR]-X-[KR]-R.

The protein resides in the virion membrane. Its subcellular location is the host cell membrane. Its function is as follows. The surface protein (SU) attaches the virus to the host cell by binding to its receptor. This interaction triggers the refolding of the transmembrane protein (TM) and is thought to activate its fusogenic potential by unmasking its fusion peptide. Fusion occurs at the host cell plasma membrane. Functionally, the transmembrane protein (TM) acts as a class I viral fusion protein. Under the current model, the protein has at least 3 conformational states: pre-fusion native state, pre-hairpin intermediate state, and post-fusion hairpin state. During viral and target cell membrane fusion, the coiled coil regions (heptad repeats) assume a trimer-of-hairpins structure, positioning the fusion peptide in close proximity to the C-terminal region of the ectodomain. The formation of this structure appears to drive apposition and subsequent fusion of viral and target cell membranes. Membranes fusion leads to delivery of the nucleocapsid into the cytoplasm. The chain is Envelope glycoprotein from Feline leukemia virus (strain C/FS246).